A 129-amino-acid chain; its full sequence is Small ribosomal subunit protein uS12 (129 aa).

Aspartate 89 bears the 3-methylthioaspartic acid mark.

This sequence belongs to the universal ribosomal protein uS12 family. Part of the 30S ribosomal subunit. Contacts proteins S8 and S17. May interact with IF1 in the 30S initiation complex.

In terms of biological role, with S4 and S5 plays an important role in translational accuracy. Functionally, interacts with and stabilizes bases of the 16S rRNA that are involved in tRNA selection in the A site and with the mRNA backbone. Located at the interface of the 30S and 50S subunits, it traverses the body of the 30S subunit contacting proteins on the other side and probably holding the rRNA structure together. The combined cluster of proteins S8, S12 and S17 appears to hold together the shoulder and platform of the 30S subunit. The protein is Small ribosomal subunit protein uS12 of Helicobacter hepaticus (strain ATCC 51449 / 3B1).